A 720-amino-acid chain; its full sequence is Beta-glucan synthesis-associated protein KRE6 (720 aa).

3 stretches are compositionally biased toward polar residues: residues 1–17, 31–51, and 69–90; these read MPLR…STNL, LSSS…NAGL, and SLSS…HDNS. The interval 1 to 90 is disordered; the sequence is MPLRNLTETH…SDSSLLHDNS (90 aa). At 1–252 the chain is on the cytoplasmic side; sequence MPLRNLTETH…KYMDKRSASG (252 aa). 6 positions are modified to phosphoserine: Ser-81, Ser-116, Ser-133, Ser-134, Ser-136, and Ser-139. Disordered stretches follow at residues 117-142 and 167-189; these read TAND…SNLS and QLNH…SFSS. Positions 133-142 are enriched in low complexity; that stretch reads SSPSLNSNLS. Residues 253 to 273 traverse the membrane as a helical; Signal-anchor for type II membrane protein segment; that stretch reads LAGVLLLFLAAIFIFIVLPAL. Over 274–720 the chain is Lumenal; that stretch reads TFTGAIDHES…CTSSKFKLSS (447 aa). Residues 289 to 664 enclose the GH16 domain; that stretch reads TYLTQYQYPQ…YVRIYQPSNA (376 aa). Residues Asn-374, Asn-461, Asn-538, Asn-563, and Asn-691 are each glycosylated (N-linked (GlcNAc...) asparagine).

Belongs to the SKN1/KRE6 family. As to quaternary structure, the cytoplasmic domain interacts with the actin patch assembly proteins LAS17 and SLA1. Interacts with KEG1.

The protein resides in the golgi apparatus membrane. In terms of biological role, involved in the synthesis of (1-&gt;6)- and (1-&gt;3)-beta-D-glucan polymers of the yeast cell wall in vivo. It is required for full activity of beta-glucan synthase in vitro. May be involved in the maturation and transport of cell wall proteins (CWP) to the cell wall. May act as a transglucosidase and contribute to the construction of a protein-bound glucan-structure that acts as an acceptor site for the addition of (1-&gt;6)-beta-D-glucan at the cell surface. This Saccharomyces cerevisiae (strain ATCC 204508 / S288c) (Baker's yeast) protein is Beta-glucan synthesis-associated protein KRE6 (KRE6).